Here is a 389-residue protein sequence, read N- to C-terminus: Chalcone synthase 2 (389 aa).

Position 55–62 (55–62 (KFQRMCDK)) interacts with CoA. The active-site Acyl-thioester intermediate is the C164. Substrate contacts are provided by residues T197 and 216 to 217 (GD). A CoA-binding site is contributed by A308.

Belongs to the thiolase-like superfamily. Chalcone/stilbene synthases family. As to quaternary structure, homodimer.

The catalysed reaction is (E)-4-coumaroyl-CoA + 3 malonyl-CoA + 3 H(+) = 2',4,4',6'-tetrahydroxychalcone + 3 CO2 + 4 CoA. The protein operates within secondary metabolite biosynthesis; flavonoid biosynthesis. In terms of biological role, the primary product of this enzyme is 4,2',4',6'-tetrahydroxychalcone (also termed naringenin-chalcone or chalcone) which can under specific conditions spontaneously isomerize into naringenin. The polypeptide is Chalcone synthase 2 (CHS2) (Medicago sativa (Alfalfa)).